We begin with the raw amino-acid sequence, 207 residues long: Cytochrome c biogenesis ATP-binding export protein CcmA (207 aa).

The ABC transporter domain occupies 2 to 204; it reads LEVKNLTAIR…NPKLRKIRLG (203 aa). 34 to 41 serves as a coordination point for ATP; sequence GRNGTGKT.

It belongs to the ABC transporter superfamily. CcmA exporter (TC 3.A.1.107) family. In terms of assembly, the complex is composed of two ATP-binding proteins (CcmA) and two transmembrane proteins (CcmB).

It localises to the cell inner membrane. The enzyme catalyses heme b(in) + ATP + H2O = heme b(out) + ADP + phosphate + H(+). Its function is as follows. Part of the ABC transporter complex CcmAB involved in the biogenesis of c-type cytochromes; once thought to export heme, this seems not to be the case, but its exact role is uncertain. Responsible for energy coupling to the transport system. This is Cytochrome c biogenesis ATP-binding export protein CcmA from Vibrio cholerae serotype O1 (strain ATCC 39315 / El Tor Inaba N16961).